Consider the following 358-residue polypeptide: Low-specificity L-threonine aldolase 1 (358 aa).

Lysine 207 bears the N6-(pyridoxal phosphate)lysine mark.

It belongs to the threonine aldolase family. The cofactor is pyridoxal 5'-phosphate. In terms of tissue distribution, expressed in root tips, seedlings, carpels and seeds.

The enzyme catalyses L-threonine = acetaldehyde + glycine. The catalysed reaction is L-allo-threonine = acetaldehyde + glycine. The protein operates within amino-acid degradation; L-threonine degradation via aldolase pathway; acetaldehyde and glycine from L-threonine: step 1/1. In terms of biological role, threonine aldolase involved in threonine degradation to glycine. May play a role in the removal of L-allo-threonine. This Arabidopsis thaliana (Mouse-ear cress) protein is Low-specificity L-threonine aldolase 1.